A 188-amino-acid chain; its full sequence is Peptidyl-tRNA hydrolase (188 aa).

Tyr-15 serves as a coordination point for tRNA. The active-site Proton acceptor is the His-20. TRNA contacts are provided by Tyr-64, Asn-66, and Asn-112.

Belongs to the PTH family. As to quaternary structure, monomer.

Its subcellular location is the cytoplasm. It catalyses the reaction an N-acyl-L-alpha-aminoacyl-tRNA + H2O = an N-acyl-L-amino acid + a tRNA + H(+). Hydrolyzes ribosome-free peptidyl-tRNAs (with 1 or more amino acids incorporated), which drop off the ribosome during protein synthesis, or as a result of ribosome stalling. Functionally, catalyzes the release of premature peptidyl moieties from peptidyl-tRNA molecules trapped in stalled 50S ribosomal subunits, and thus maintains levels of free tRNAs and 50S ribosomes. This is Peptidyl-tRNA hydrolase from Cytophaga hutchinsonii (strain ATCC 33406 / DSM 1761 / CIP 103989 / NBRC 15051 / NCIMB 9469 / D465).